Here is a 253-residue protein sequence, read N- to C-terminus: Ribonuclease HII (253 aa).

The region spanning 70–253 (PLVAGIDEVG…RSFSPVQNAL (184 aa)) is the RNase H type-2 domain. A divalent metal cation is bound by residues D76, E77, and D168.

Belongs to the RNase HII family. Requires Mn(2+) as cofactor. It depends on Mg(2+) as a cofactor.

The protein resides in the cytoplasm. The enzyme catalyses Endonucleolytic cleavage to 5'-phosphomonoester.. Endonuclease that specifically degrades the RNA of RNA-DNA hybrids. This chain is Ribonuclease HII, found in Latilactobacillus sakei subsp. sakei (strain 23K) (Lactobacillus sakei subsp. sakei).